We begin with the raw amino-acid sequence, 337 residues long: Eukaryotic translation initiation factor 3 subunit I (337 aa).

5 WD repeats span residues Gly-8–Thr-47, Gly-50–Asp-91, Cys-147–Asn-186, Glu-191–Thr-230, and Gly-288–Met-327.

This sequence belongs to the eIF-3 subunit I family. As to quaternary structure, component of the eukaryotic translation initiation factor 3 (eIF-3) complex.

It localises to the cytoplasm. Functionally, component of the eukaryotic translation initiation factor 3 (eIF-3) complex, which is involved in protein synthesis of a specialized repertoire of mRNAs and, together with other initiation factors, stimulates binding of mRNA and methionyl-tRNAi to the 40S ribosome. The eIF-3 complex specifically targets and initiates translation of a subset of mRNAs involved in cell proliferation. In Aspergillus niger (strain ATCC MYA-4892 / CBS 513.88 / FGSC A1513), this protein is Eukaryotic translation initiation factor 3 subunit I (tif34).